Reading from the N-terminus, the 320-residue chain is uncharacterized protein (320 aa).

It belongs to the NAD(P)-dependent epimerase/dehydratase family.

This is an uncharacterized protein from Staphylococcus saprophyticus subsp. saprophyticus (strain ATCC 15305 / DSM 20229 / NCIMB 8711 / NCTC 7292 / S-41).